We begin with the raw amino-acid sequence, 196 residues long: Blue copper protein (196 aa).

The first 22 residues, 1 to 22 (MAGVFKTVTFLVLVFAAVVVFA), serve as a signal peptide directing secretion. The Phytocyanin domain occupies 23–125 (EDYDVGDDTE…GQKLSITVVA (103 aa)). His66 serves as a coordination point for Cu cation. An intrachain disulfide couples Cys79 to Cys113. Asn98 is a glycosylation site (N-linked (GlcNAc...) asparagine). Cu cation contacts are provided by Cys107, His112, and Gln117. The tract at residues 133–173 (TPGAGATPAPGSTPSTGGTTPPTAGGTTTPSGSSGTTTPAG) is disordered. Positions 135 to 173 (GAGATPAPGSTPSTGGTTPPTAGGTTTPSGSSGTTTPAG) are enriched in low complexity. Residue Asn174 is the site of GPI-anchor amidated asparagine attachment. Positions 175 to 196 (AASSLGGATFLVAFVSAVVALF) are cleaved as a propeptide — removed in mature form.

The protein localises to the cell membrane. Its function is as follows. Probably acts as an electron carrier. In Arabidopsis thaliana (Mouse-ear cress), this protein is Blue copper protein (BCB).